Consider the following 197-residue polypeptide: RILP-like protein 2 (197 aa).

An RH1 domain is found at 14 to 96 (EDEGALAKSP…KQEVEGLRRA (83 aa)). A coiled-coil region spans residues 65 to 153 (LEALVNEGSL…VQEELQCYRS (89 aa)). The RH2 domain occupies 119–184 (RPRFTLQELR…GNGEKEERTI (66 aa)).

In terms of assembly, homodimer. Interacts (via N-terminus) with MYO5A, the interaction is required for its role in dendrite formation. Interacts with RAC1. Interacts with RAB8A; interaction is dependent on the phosphorylation of RAB8A on 'Thr-72'. Interacts with RAB10 and RAB12; interaction is dependent on the phosphorylation of 'Thr-73' on RAB10 and 'Ser-105' on RAB12.

The protein resides in the cytoplasm. It localises to the cytosol. The protein localises to the cytoskeleton. Its subcellular location is the microtubule organizing center. It is found in the centrosome. The protein resides in the cell projection. It localises to the cilium. Involved in cell shape and neuronal morphogenesis, positively regulating the establishment and maintenance of dendritic spines. Plays a role in cellular protein transport, including protein transport away from primary cilia. May function via activation of RAC1 and PAK1. The chain is RILP-like protein 2 (Rilpl2) from Rattus norvegicus (Rat).